A 542-amino-acid chain; its full sequence is Chaperonin GroEL (542 aa).

ATP-binding positions include 29–32, 86–90, Gly-413, 478–480, and Asp-494; these read TLGP, DGTTT, and DAL.

Belongs to the chaperonin (HSP60) family. In terms of assembly, forms a cylinder of 14 subunits composed of two heptameric rings stacked back-to-back. Interacts with the co-chaperonin GroES.

It localises to the cytoplasm. The enzyme catalyses ATP + H2O + a folded polypeptide = ADP + phosphate + an unfolded polypeptide.. In terms of biological role, together with its co-chaperonin GroES, plays an essential role in assisting protein folding. The GroEL-GroES system forms a nano-cage that allows encapsulation of the non-native substrate proteins and provides a physical environment optimized to promote and accelerate protein folding. This Clostridioides difficile (strain 630) (Peptoclostridium difficile) protein is Chaperonin GroEL.